Consider the following 245-residue polypeptide: 7-cyano-7-deazaguanine synthase (245 aa).

ATP is bound at residue 19–29; that stretch reads FSGGQDSATCL. Residues Cys-207, Cys-222, Cys-225, and Cys-228 each coordinate Zn(2+).

This sequence belongs to the QueC family. Requires Zn(2+) as cofactor.

The enzyme catalyses 7-carboxy-7-deazaguanine + NH4(+) + ATP = 7-cyano-7-deazaguanine + ADP + phosphate + H2O + H(+). The protein operates within purine metabolism; 7-cyano-7-deazaguanine biosynthesis. Catalyzes the ATP-dependent conversion of 7-carboxy-7-deazaguanine (CDG) to 7-cyano-7-deazaguanine (preQ(0)). This Gluconacetobacter diazotrophicus (strain ATCC 49037 / DSM 5601 / CCUG 37298 / CIP 103539 / LMG 7603 / PAl5) protein is 7-cyano-7-deazaguanine synthase.